Reading from the N-terminus, the 59-residue chain is Aedesin (59 aa).

The signal sequence occupies residues M1–A23.

The protein belongs to the cecropin family. In terms of tissue distribution, salivary gland (at protein level).

It is found in the secreted. Functionally, antimicrobial peptide. Exhibits antibacterial activity against Gram-negative bacteria, such as Escherichia coli, Pseudomonas aeruginosa, Acinetobacter baumannii and Klebsiella pneumoniae. Shows no antibacterial effects against Gram-positive bacteria, such as Staphylococcus aureus, Enterococcus faecalis and Enterococcus faecium. Exhibits antiviral activity against all four dengue virus serotypes and chikungunya virus. Exhibits leishmanicidal activity. Partially neutralizes lipopolysaccharides (LPS). Exhibits anti-inflammatory properties: inhibits LPS-induced iNOS/NOS2 transcription, nitric oxide (NO) and pro-inflammatory cytokine production in mouse macrophages and human peripheral blood mononuclear cells (PBMCs); inhibits LPS-induced activation of MAPK and NF-kappa-B signaling pathways in mouse macrophages. The protein is Aedesin of Aedes aegypti (Yellowfever mosquito).